A 347-amino-acid polypeptide reads, in one-letter code: Quinolinate synthase (347 aa).

Residues histidine 47 and serine 68 each coordinate iminosuccinate. [4Fe-4S] cluster is bound at residue cysteine 113. Iminosuccinate is bound by residues 139 to 141 (YAN) and serine 156. Cysteine 200 is a binding site for [4Fe-4S] cluster. Iminosuccinate-binding positions include 226–228 (HPE) and threonine 243. A [4Fe-4S] cluster-binding site is contributed by cysteine 297.

Belongs to the quinolinate synthase family. Type 1 subfamily. The cofactor is [4Fe-4S] cluster.

It is found in the cytoplasm. It catalyses the reaction iminosuccinate + dihydroxyacetone phosphate = quinolinate + phosphate + 2 H2O + H(+). It participates in cofactor biosynthesis; NAD(+) biosynthesis; quinolinate from iminoaspartate: step 1/1. Functionally, catalyzes the condensation of iminoaspartate with dihydroxyacetone phosphate to form quinolinate. The sequence is that of Quinolinate synthase from Shigella boydii serotype 4 (strain Sb227).